A 309-amino-acid chain; its full sequence is DnaJ-like protein MG002 homolog (309 aa).

One can recognise a J domain in the interval 1-66 (MTLYDLLELP…KAEYDAMLRF (66 aa)).

This is DnaJ-like protein MG002 homolog from Mycoplasma pneumoniae (strain ATCC 29342 / M129 / Subtype 1) (Mycoplasmoides pneumoniae).